The chain runs to 344 residues: Holliday junction branch migration complex subunit RuvB (344 aa).

The large ATPase domain (RuvB-L) stretch occupies residues 1-183 (MPDRELISGD…FGLVLRLDPY (183 aa)). ATP contacts are provided by residues Leu-22, Arg-23, Gly-64, Lys-67, Thr-68, Thr-69, 130-132 (EDF), Arg-173, Tyr-183, and Arg-220. Thr-68 contributes to the Mg(2+) binding site. Positions 184–254 (NTEELKAIVK…VAQTALNLLD (71 aa)) are small ATPAse domain (RuvB-S). A head domain (RuvB-H) region spans residues 257–344 (RYGLDEIDQK…EGDHPSLFEA (88 aa)). Positions 312 and 317 each coordinate DNA.

The protein belongs to the RuvB family. In terms of assembly, homohexamer. Forms an RuvA(8)-RuvB(12)-Holliday junction (HJ) complex. HJ DNA is sandwiched between 2 RuvA tetramers; dsDNA enters through RuvA and exits via RuvB. An RuvB hexamer assembles on each DNA strand where it exits the tetramer. Each RuvB hexamer is contacted by two RuvA subunits (via domain III) on 2 adjacent RuvB subunits; this complex drives branch migration. In the full resolvosome a probable DNA-RuvA(4)-RuvB(12)-RuvC(2) complex forms which resolves the HJ.

It localises to the cytoplasm. The enzyme catalyses ATP + H2O = ADP + phosphate + H(+). Functionally, the RuvA-RuvB-RuvC complex processes Holliday junction (HJ) DNA during genetic recombination and DNA repair, while the RuvA-RuvB complex plays an important role in the rescue of blocked DNA replication forks via replication fork reversal (RFR). RuvA specifically binds to HJ cruciform DNA, conferring on it an open structure. The RuvB hexamer acts as an ATP-dependent pump, pulling dsDNA into and through the RuvAB complex. RuvB forms 2 homohexamers on either side of HJ DNA bound by 1 or 2 RuvA tetramers; 4 subunits per hexamer contact DNA at a time. Coordinated motions by a converter formed by DNA-disengaged RuvB subunits stimulates ATP hydrolysis and nucleotide exchange. Immobilization of the converter enables RuvB to convert the ATP-contained energy into a lever motion, pulling 2 nucleotides of DNA out of the RuvA tetramer per ATP hydrolyzed, thus driving DNA branch migration. The RuvB motors rotate together with the DNA substrate, which together with the progressing nucleotide cycle form the mechanistic basis for DNA recombination by continuous HJ branch migration. Branch migration allows RuvC to scan DNA until it finds its consensus sequence, where it cleaves and resolves cruciform DNA. This chain is Holliday junction branch migration complex subunit RuvB, found in Solibacter usitatus (strain Ellin6076).